The sequence spans 378 residues: Protein RecA (378 aa).

An ATP-binding site is contributed by 79 to 86 (GPESSGKT).

This sequence belongs to the RecA family.

The protein resides in the cytoplasm. Functionally, can catalyze the hydrolysis of ATP in the presence of single-stranded DNA, the ATP-dependent uptake of single-stranded DNA by duplex DNA, and the ATP-dependent hybridization of homologous single-stranded DNAs. It interacts with LexA causing its activation and leading to its autocatalytic cleavage. The chain is Protein RecA from Streptococcus pyogenes serotype M12 (strain MGAS2096).